Reading from the N-terminus, the 216-residue chain is Phosducin-like protein 3 (216 aa).

A coiled-coil region spans residues alanine 13–asparagine 59. One can recognise a Phosducin domain in the interval asparagine 29 to threonine 163.

This sequence belongs to the phosducin family. In terms of tissue distribution, highly expressed in germline cells of the testis from the spermatogonia stage until the early spermatid stage but is no longer observed in late-stage spermatids in the distal end of the testis.

It carries out the reaction [thioredoxin]-dithiol + NADP(+) = [thioredoxin]-disulfide + NADPH + H(+). Its function is as follows. Has redox activity with thioredoxin. Required for male fertility and maturation of sperm past the canoe stage during spermiogenesis. The polypeptide is Phosducin-like protein 3 (Drosophila melanogaster (Fruit fly)).